Consider the following 430-residue polypeptide: Lipoyl synthase, mitochondrial (430 aa).

A mitochondrion-targeting transit peptide spans 1 to 37 (MATSAGKLRTLYSAHSSLSSLPPSARPTLQLATLRSY). The span at 39–55 (TTTPHDSPIGNTSNTPP) shows a compositional bias: polar residues. Residues 39–59 (TTTPHDSPIGNTSNTPPTVKR) form a disordered region. The [4Fe-4S] cluster site is built by Cys141, Cys146, Cys152, Cys172, Cys176, Cys179, and Ser387. The Radical SAM core domain occupies 155–376 (GSSKSAATAT…KERALEMGFL (222 aa)).

This sequence belongs to the radical SAM superfamily. Lipoyl synthase family. [4Fe-4S] cluster is required as a cofactor.

It localises to the mitochondrion. It carries out the reaction [[Fe-S] cluster scaffold protein carrying a second [4Fe-4S](2+) cluster] + N(6)-octanoyl-L-lysyl-[protein] + 2 oxidized [2Fe-2S]-[ferredoxin] + 2 S-adenosyl-L-methionine + 4 H(+) = [[Fe-S] cluster scaffold protein] + N(6)-[(R)-dihydrolipoyl]-L-lysyl-[protein] + 4 Fe(3+) + 2 hydrogen sulfide + 2 5'-deoxyadenosine + 2 L-methionine + 2 reduced [2Fe-2S]-[ferredoxin]. The protein operates within protein modification; protein lipoylation via endogenous pathway; protein N(6)-(lipoyl)lysine from octanoyl-[acyl-carrier-protein]: step 2/2. Functionally, catalyzes the radical-mediated insertion of two sulfur atoms into the C-6 and C-8 positions of the octanoyl moiety bound to the lipoyl domains of lipoate-dependent enzymes, thereby converting the octanoylated domains into lipoylated derivatives. The protein is Lipoyl synthase, mitochondrial of Ajellomyces capsulatus (strain H143) (Darling's disease fungus).